A 313-amino-acid chain; its full sequence is DDRGK domain-containing protein 1 (313 aa).

A helical transmembrane segment spans residues 1–28 (MVSPVVYLVVAALLVGLILFLTRGRGRA). The mediates interaction with CDK5RAP3 stretch occupies residues 1 to 113 (MVSPVVYLVV…IEKPVETHLS (113 aa)). At 29–313 (AAAAQEPLHN…GRETPAQAPA (285 aa)) the chain is on the cytoplasmic side. The segment at 40-88 (EVPAAAGRVARPQPLEPEEQRAAGRPRRRRDLGSRLQAQRRAQRVAWAD) is disordered. A phosphoserine mark is found at Ser-73 and Ser-113. The segment covering 73 to 87 (SRLQAQRRAQRVAWA) has biased composition (low complexity). The tract at residues 117 to 215 (GAKKLRKLEE…MTEEQSHSFL (99 aa)) is mediates interaction with TRIP4. Residues 130–185 (RKAQREAEEAEREERKRLESQREAEWKKEEERLRLEEEQKEEEERKAQEEQAQREH) are disordered. The UFM1-interacting motif (UFIM) motif lies at 194 to 208 (TFVVVEEGVGETMTE). The mediates interaction with UFL1 stretch occupies residues 215–313 (LAEFINYIKQ…GRETPAQAPA (99 aa)). Residues 228 to 272 (VLLEDLASQVGLRTQDTINRIQDLLAEGTLTGVIDDRGKFIYITP) enclose the PCI domain. Lys-266 participates in a covalent cross-link: Glycyl lysine isopeptide (Lys-Gly) (interchain with G-Cter in UFM1).

The protein belongs to the DDRGK1 family. In terms of assembly, component of the UFM1 ribosome E3 ligase (UREL) complex, composed of UFL1, DDRGK1 and CDK5RAP3. Interacts with (unphosphorylated) ERN1/IRE1-alpha; interaction is dependent on UFM1 and takes place in response to endoplasmic reticulum stress, regulating ERN1/IRE1-alpha stability. Interacts with NFKBIA. Interacts with SOX9. Post-translationally, ubiquitinated. Ubiquitination probably triggers proteasomal degradation and is negatively regulated by UFL1, the enzyme involved in the ufmylation of DDRGK1. In terms of processing, ufmylated; conjugated to ubiquitin-like protein UFM1, probably at Lys-266 by UFL1. The relevance of ufmylation is however unclear: as DDRGK1 acts as a substrate adapter for ufmylation, it is uncertain whether ufmylation is a collateral effect of the ufmylation process or whether it is required to regulate its activity.

The protein resides in the endoplasmic reticulum membrane. Component of the UFM1 ribosome E3 ligase (UREL) complex, a multiprotein complex that catalyzes ufmylation of endoplasmic reticulum-docked proteins. The UREL complex plays a key role in ribosome recycling by mediating mono-ufmylation of the RPL26/uL24 subunit of the 60S ribosome following ribosome dissociation: ufmylation weakens the junction between post-termination 60S subunits and SEC61 translocons, promoting release and recycling of the large ribosomal subunit from the endoplasmic reticulum membrane. Ufmylation of RPL26/uL24 and subsequent 60S ribosome recycling either take place after normal termination of translation or after ribosome stalling during cotranslational translocation at the endoplasmic reticulum. Within the UREL complex, DDRGK1 tethers the complex to the endoplasmic reticulum membrane to restrict its activity to endoplasmic reticulum-docked ribosomes and acts as an ufmylation 'reader': following RPL26/uL24 ufmylation, DDRGK1 specifically binds to ufmylated RPL26/uL24 via its UFIM motif, resulting in stable association between the 60S ribosome and the UREL complex, followed by dissociation of the 60S ribosome subunit from the endoplasmic reticulum membrane. The UREL complex is also involved in reticulophagy in response to endoplasmic reticulum stress by promoting ufmylation of proteins such as CYB5R3 and RPN1, thereby promoting lysosomal degradation of ufmylated proteins. Ufmylation-dependent reticulophagy inhibits the unfolded protein response (UPR) by regulating ERN1/IRE1-alpha stability. Acts as a regulator of immunity by promoting differentiation of B-cells into plasma cells: acts by promoting expansion of the endoplasmic reticulum and regulating the unfolded protein response (UPR). May also be required for TRIP4 ufmylation. May play a role in NF-kappa-B-mediated transcription through regulation of the phosphorylation and the degradation of NFKBIA, the inhibitor of NF-kappa-B. Plays a role in cartilage development through SOX9, inhibiting the ubiquitin-mediated proteasomal degradation of this transcriptional regulator. Required for stabilization and ufmylation of ATG9A. The protein is DDRGK domain-containing protein 1 of Bos taurus (Bovine).